A 285-amino-acid polypeptide reads, in one-letter code: Type II secretion system protein C (285 aa).

Over 1–27 (MARLQAFKDPSFHSLVATFRSLPLIRR) the chain is Cytoplasmic. Residues 28-48 (FVLGLILLLICQQLAVLTWRF) form a helical membrane-spanning segment. Topologically, residues 49-285 (LLPEDSRIVG…DIYLALDGDH (237 aa)) are periplasmic.

It belongs to the GSP C family.

It localises to the cell inner membrane. Its function is as follows. Involved in a type II secretion system (T2SS, formerly general secretion pathway, GSP) for the export of proteins. Required for the translocation of the multiple pectic enzymes. This is Type II secretion system protein C (outC) from Pectobacterium carotovorum subsp. carotovorum (Erwinia carotovora subsp. carotovora).